Here is a 688-residue protein sequence, read N- to C-terminus: MAKIRVYELAKELNISSKELITLLEEEFSVEVKNHMSAIEDEDANLIKELLSGKEKSEKTKEEDDEIETTAKNPIKESMNNKKSNKRDDKNEKVNTENAEDMGIITMTSDTITVKEISDKLEKSYAEVIKELMLMGVMASVNQEINFEMAEKLAAKFDMEILKEDEDEKEDLEDILKDNEEEEYLQKRSPIITVMGHVDHGKTSLLDAIRKSKITSTEAGGITQHIGAYTVELNGEAITFLDTPGHAAFTAMRARGAQVTDIVILVVAADDGIMPQTQEAISHCKAANVPLIVAINKIDRPGANIDKVKQELTEYGLVAEDWGGDTICVPVSAHTKEGIDDLLEMILLSSEILELKANPNRKAKGTVVEAKLDKGRGPVATLLIQNGTLRVGDSIVVGSTYGRIRAMFNDKGRNIESAGPSTPVEILGLSEVPEAGDKFYQVKEEKTARGIADKRKEKIRDEYLQSTHKVSLEDLYNQIQEGTVKELGLIVKADVQGSVEALKQSLEKLSTEEVKVRVIHGGVGAINETDVTLATASNGIILGFNVRPDNNAIIASERDGVDIKTYRVIYDAIEDIKSAMLGMLEPEFKEVVIGTAEVRQVYKISSVGTIAGAYIQTGKLARNAGARVIRDGIVIFESELASLKRFKDDAKEVAQGYECGLSIEKFNDIKEGDIIECFIMEEIKKKTL.

Basic and acidic residues-rich tracts occupy residues 53-62 and 86-95; these read GKEKSEKTKE and KRDDKNEKVN. Positions 53–100 are disordered; the sequence is GKEKSEKTKEEDDEIETTAKNPIKESMNNKKSNKRDDKNEKVNTENAE. Residues 187–354 enclose the tr-type G domain; that stretch reads KRSPIITVMG…MILLSSEILE (168 aa). Positions 196–203 are G1; the sequence is GHVDHGKT. Position 196–203 (196–203) interacts with GTP; it reads GHVDHGKT. Positions 221–225 are G2; the sequence is GITQH. The interval 242–245 is G3; it reads DTPG. Residues 242–246 and 296–299 each bind GTP; these read DTPGH and NKID. Residues 296 to 299 form a G4 region; the sequence is NKID. A G5 region spans residues 332 to 334; that stretch reads SAH.

Belongs to the TRAFAC class translation factor GTPase superfamily. Classic translation factor GTPase family. IF-2 subfamily.

It localises to the cytoplasm. Its function is as follows. One of the essential components for the initiation of protein synthesis. Protects formylmethionyl-tRNA from spontaneous hydrolysis and promotes its binding to the 30S ribosomal subunits. Also involved in the hydrolysis of GTP during the formation of the 70S ribosomal complex. This Clostridium botulinum (strain Kyoto / Type A2) protein is Translation initiation factor IF-2.